Consider the following 248-residue polypeptide: mRNA-decapping protein OPG122 (248 aa).

In terms of domain architecture, Nudix hydrolase spans 45-227; the sequence is HKRVSVSAIL…IAKYALDTAK (183 aa). Positions 125-147 match the Nudix box motif; the sequence is GGILKRGENVPECLSREIKEEVN. Glu132 is a binding site for Mg(2+). The Nucleophile role is filled by Glu141. Glu145 provides a ligand contact to Mn(2+). Asp167 provides a ligand contact to Mg(2+).

Belongs to the Nudix hydrolase family. Mg(2+) is required as a cofactor. Mn(2+) serves as cofactor.

The protein resides in the host mitochondrion. Functionally, decapping enzyme that remove the protective 5'-cap from both host and viral mRNAs to commit transcripts for decay by the cellular exonuclease XRN1. Preferentially targets spliced mRNAs and since all viral genes are intronless, it preferentially targets host over viral transcripts. Acceleration of the turnover of cellular transcripts promotes the shutoff of host protein synthesis and therefore diminish the magnitude of antiviral response. In Variola virus (isolate Human/India/Ind3/1967) (VARV), this protein is mRNA-decapping protein OPG122 (OPG122).